A 223-amino-acid chain; its full sequence is Ribonuclease HII (223 aa).

In terms of domain architecture, RNase H type-2 spans 32-223 (LYIAGVDEVG…LKKRYRDYMS (192 aa)). Positions 38, 39, and 130 each coordinate a divalent metal cation.

The protein belongs to the RNase HII family. Mn(2+) is required as a cofactor. The cofactor is Mg(2+).

The protein resides in the cytoplasm. The enzyme catalyses Endonucleolytic cleavage to 5'-phosphomonoester.. In terms of biological role, endonuclease that specifically degrades the RNA of RNA-DNA hybrids. The polypeptide is Ribonuclease HII (Bartonella henselae (strain ATCC 49882 / DSM 28221 / CCUG 30454 / Houston 1) (Rochalimaea henselae)).